The chain runs to 249 residues: Triosephosphate isomerase (249 aa).

Residues N12 and K14 each coordinate substrate. K14 carries the N6-acetyllysine modification. The residue at position 21 (S21) is a Phosphoserine. Y68 carries the 3'-nitrotyrosine modification. S80 is modified (phosphoserine). Catalysis depends on H96, which acts as the Electrophile. S106 carries the post-translational modification Phosphoserine. Residue K142 forms a Glycyl lysine isopeptide (Lys-Gly) (interchain with G-Cter in SUMO1) linkage. K149 is modified (N6-succinyllysine). K156 bears the N6-acetyllysine; alternate mark. The residue at position 156 (K156) is an N6-succinyllysine; alternate. S159 is modified (phosphoserine). The active-site Proton acceptor is E166. A Phosphothreonine modification is found at T173. Position 194 is an N6-acetyllysine; alternate (K194). K194 is modified (N6-succinyllysine; alternate). The residue at position 194 (K194) is an N6-methyllysine; alternate. S198 bears the Phosphoserine mark. 3'-nitrotyrosine is present on Y209. Residue S212 is modified to Phosphoserine. Residue T214 is modified to Phosphothreonine. S223 carries the phosphoserine modification. K238 is subject to N6-acetyllysine.

It belongs to the triosephosphate isomerase family. Homodimer.

It is found in the cytoplasm. The enzyme catalyses D-glyceraldehyde 3-phosphate = dihydroxyacetone phosphate. It catalyses the reaction dihydroxyacetone phosphate = methylglyoxal + phosphate. It functions in the pathway carbohydrate degradation; glycolysis; D-glyceraldehyde 3-phosphate from glycerone phosphate: step 1/1. The protein operates within carbohydrate biosynthesis; gluconeogenesis. Triosephosphate isomerase is an extremely efficient metabolic enzyme that catalyzes the interconversion between dihydroxyacetone phosphate (DHAP) and D-glyceraldehyde-3-phosphate (G3P) in glycolysis and gluconeogenesis. In terms of biological role, it is also responsible for the non-negligible production of methylglyoxal a reactive cytotoxic side-product that modifies and can alter proteins, DNA and lipids. The protein is Triosephosphate isomerase (TPI1) of Homo sapiens (Human).